A 36-amino-acid chain; its full sequence is Putative DNA-binding protein inhibitor ID-2B (36 aa).

This chain is Putative DNA-binding protein inhibitor ID-2B (ID2B), found in Homo sapiens (Human).